Reading from the N-terminus, the 236-residue chain is 5'-methylthioadenosine/S-adenosylhomocysteine nucleosidase (236 aa).

The Proton acceptor role is filled by Glu12. Residues Gly78, Ile153, and Met174–Glu175 contribute to the substrate site. The active-site Proton donor is Asp198.

This sequence belongs to the PNP/UDP phosphorylase family. MtnN subfamily.

It catalyses the reaction S-adenosyl-L-homocysteine + H2O = S-(5-deoxy-D-ribos-5-yl)-L-homocysteine + adenine. The enzyme catalyses S-methyl-5'-thioadenosine + H2O = 5-(methylsulfanyl)-D-ribose + adenine. The catalysed reaction is 5'-deoxyadenosine + H2O = 5-deoxy-D-ribose + adenine. It functions in the pathway amino-acid biosynthesis; L-methionine biosynthesis via salvage pathway; S-methyl-5-thio-alpha-D-ribose 1-phosphate from S-methyl-5'-thioadenosine (hydrolase route): step 1/2. Its function is as follows. Catalyzes the irreversible cleavage of the glycosidic bond in both 5'-methylthioadenosine (MTA) and S-adenosylhomocysteine (SAH/AdoHcy) to adenine and the corresponding thioribose, 5'-methylthioribose and S-ribosylhomocysteine, respectively. Also cleaves 5'-deoxyadenosine, a toxic by-product of radical S-adenosylmethionine (SAM) enzymes, into 5-deoxyribose and adenine. The chain is 5'-methylthioadenosine/S-adenosylhomocysteine nucleosidase from Shewanella baltica (strain OS155 / ATCC BAA-1091).